Reading from the N-terminus, the 397-residue chain is Glutamate 5-kinase (397 aa).

A disordered region spans residues 1-28; the sequence is MVADLTSDISESQEQETETNSANNNGAV. Residue Lys-40 coordinates ATP. Residues Ser-80, Asp-168, and Asn-180 each coordinate substrate. ATP-binding positions include 200-201 and 243-249; these read SD and SGGMASK. The PUA domain maps to 306–383; sequence HGQVYIDQGA…QEIADILGYE (78 aa).

It belongs to the glutamate 5-kinase family.

Its subcellular location is the cytoplasm. It catalyses the reaction L-glutamate + ATP = L-glutamyl 5-phosphate + ADP. The protein operates within amino-acid biosynthesis; L-proline biosynthesis; L-glutamate 5-semialdehyde from L-glutamate: step 1/2. Functionally, catalyzes the transfer of a phosphate group to glutamate to form L-glutamate 5-phosphate. The protein is Glutamate 5-kinase of Zymomonas mobilis subsp. mobilis (strain ATCC 31821 / ZM4 / CP4).